The following is a 157-amino-acid chain: Peptide methionine sulfoxide reductase MsrA (157 aa).

Residue Cys-13 is part of the active site.

Belongs to the MsrA Met sulfoxide reductase family.

It carries out the reaction L-methionyl-[protein] + [thioredoxin]-disulfide + H2O = L-methionyl-(S)-S-oxide-[protein] + [thioredoxin]-dithiol. The catalysed reaction is [thioredoxin]-disulfide + L-methionine + H2O = L-methionine (S)-S-oxide + [thioredoxin]-dithiol. Functionally, has an important function as a repair enzyme for proteins that have been inactivated by oxidation. Catalyzes the reversible oxidation-reduction of methionine sulfoxide in proteins to methionine. The sequence is that of Peptide methionine sulfoxide reductase MsrA from Methanococcus maripaludis (strain C6 / ATCC BAA-1332).